The sequence spans 120 residues: Small ribosomal subunit protein eS24 (120 aa).

Residues Arg101–Gly120 form a disordered region.

This sequence belongs to the eukaryotic ribosomal protein eS24 family.

The chain is Small ribosomal subunit protein eS24 from Saccharolobus islandicus (strain M.16.4 / Kamchatka #3) (Sulfolobus islandicus).